The primary structure comprises 480 residues: tRNA modification GTPase MnmE (480 aa).

(6S)-5-formyl-5,6,7,8-tetrahydrofolate-binding residues include Arg20, Glu114, and Lys154. The TrmE-type G domain occupies 250 to 406 (GLKLAIIGPP…ILKNIENIAE (157 aa)). Asn260 is a K(+) binding site. GTP contacts are provided by residues 260–265 (NVGKSS), 279–285 (SNIAGTT), and 304–307 (DTAG). A Mg(2+)-binding site is contributed by Ser264. Residues Ser279, Ile281, and Thr284 each coordinate K(+). Residue Thr285 participates in Mg(2+) binding. (6S)-5-formyl-5,6,7,8-tetrahydrofolate is bound at residue Lys480.

The protein belongs to the TRAFAC class TrmE-Era-EngA-EngB-Septin-like GTPase superfamily. TrmE GTPase family. Homodimer. Heterotetramer of two MnmE and two MnmG subunits. K(+) serves as cofactor.

Its subcellular location is the cytoplasm. Functionally, exhibits a very high intrinsic GTPase hydrolysis rate. Involved in the addition of a carboxymethylaminomethyl (cmnm) group at the wobble position (U34) of certain tRNAs, forming tRNA-cmnm(5)s(2)U34. The chain is tRNA modification GTPase MnmE from Rickettsia felis (strain ATCC VR-1525 / URRWXCal2) (Rickettsia azadi).